We begin with the raw amino-acid sequence, 55 residues long: DNA-directed RNA polymerase subunit Rpo10 (55 aa).

Zn(2+) contacts are provided by Cys-6, Cys-9, Cys-43, and Cys-44.

The protein belongs to the archaeal Rpo10/eukaryotic RPB10 RNA polymerase subunit family. In terms of assembly, part of the RNA polymerase complex. Zn(2+) serves as cofactor.

The protein localises to the cytoplasm. The enzyme catalyses RNA(n) + a ribonucleoside 5'-triphosphate = RNA(n+1) + diphosphate. Functionally, DNA-dependent RNA polymerase (RNAP) catalyzes the transcription of DNA into RNA using the four ribonucleoside triphosphates as substrates. The chain is DNA-directed RNA polymerase subunit Rpo10 from Methanothermobacter thermautotrophicus (strain ATCC 29096 / DSM 1053 / JCM 10044 / NBRC 100330 / Delta H) (Methanobacterium thermoautotrophicum).